The sequence spans 1222 residues: ATP-dependent helicase/nuclease subunit A (1222 aa).

The 457-residue stretch at 39–495 folds into the UvrD-like helicase ATP-binding domain; the sequence is QKRTAQQIEA…ILLKENFRSQ (457 aa). 60-67 is a binding site for ATP; that stretch reads ASAGSGKT. One can recognise a UvrD-like helicase C-terminal domain in the interval 524–810; the sequence is QLIAGSHAQT…NLMTIHKSKG (287 aa).

Belongs to the helicase family. AddA subfamily. In terms of assembly, heterodimer of AddA and AddB/RexB. Requires Mg(2+) as cofactor.

It catalyses the reaction Couples ATP hydrolysis with the unwinding of duplex DNA by translocating in the 3'-5' direction.. The catalysed reaction is ATP + H2O = ADP + phosphate + H(+). Its function is as follows. The heterodimer acts as both an ATP-dependent DNA helicase and an ATP-dependent, dual-direction single-stranded exonuclease. Recognizes the chi site generating a DNA molecule suitable for the initiation of homologous recombination. The AddA nuclease domain is required for chi fragment generation; this subunit has the helicase and 3' -&gt; 5' nuclease activities. The sequence is that of ATP-dependent helicase/nuclease subunit A from Streptococcus pyogenes serotype M49 (strain NZ131).